A 30-amino-acid chain; its full sequence is Cliotide T6 (30 aa).

The segment at residues 1–30 is a cross-link (cyclopeptide (Ser-Asn)); sequence SIPCGESCVYIPCITTIVGCSCKDKVCYKN. 3 disulfides stabilise this stretch: Cys4–Cys20, Cys8–Cys22, and Cys13–Cys27.

In terms of processing, contains 3 disulfide bonds. Post-translationally, this is a cyclic peptide. Expressed in pod but not in flower, stem, shoot, leaf, seed, root and nodule (at protein level).

In terms of biological role, probably participates in a plant defense mechanism. The polypeptide is Cliotide T6 (Clitoria ternatea (Butterfly pea)).